Consider the following 182-residue polypeptide: Tropomyosin-like protein (182 aa).

The stretch at 1 to 68 forms a coiled coil; the sequence is FDRYNQILDE…ELEQRRTEQQ (68 aa). Over residues 32–66 the composition is skewed to basic and acidic residues; the sequence is DEETKKIKQEEAEMKKKIEGEASRKKLELEQRRTE. 2 disordered regions span residues 32 to 81 and 140 to 160; these read DEET…GSTD and DQPA…DAGL. A compositionally biased stretch (low complexity) spans 140–153; that stretch reads DQPAQAGPEPAAPA.

The protein resides in the cytoplasm. The protein localises to the cytoskeleton. This chain is Tropomyosin-like protein, found in Pichia angusta (Yeast).